Reading from the N-terminus, the 273-residue chain is Tryptase (273 aa).

A signal peptide spans 1–18 (MLKLLLLTLPLLSSLVHA). The propeptide at 19–28 (APGPAMTREG) is activation peptide. Residues 29-270 (IVGGQEAHGN…YLDWIHHYVP (242 aa)) form the Peptidase S1 domain. The N-linked (GlcNAc...) asparagine glycan is linked to Asn49. Cys57 and Cys73 are disulfide-bonded. Catalysis depends on charge relay system residues His72 and Asp119. Residue Asn130 is glycosylated (N-linked (GlcNAc...) asparagine). 3 disulfides stabilise this stretch: Cys153–Cys228, Cys186–Cys209, and Cys218–Cys246. Ser222 serves as the catalytic Charge relay system.

The protein belongs to the peptidase S1 family. Tryptase subfamily.

The enzyme catalyses Preferential cleavage: Arg-|-Xaa, Lys-|-Xaa, but with more restricted specificity than trypsin.. Its function is as follows. Tryptase is the major neutral protease present in mast cells and is secreted upon the coupled activation-degranulation response of this cell type. May play a role in innate immunity. The polypeptide is Tryptase (Tpsab1) (Mus musculus (Mouse)).